We begin with the raw amino-acid sequence, 459 residues long: Argininosuccinate lyase (459 aa).

It belongs to the lyase 1 family. Argininosuccinate lyase subfamily.

It localises to the cytoplasm. The enzyme catalyses 2-(N(omega)-L-arginino)succinate = fumarate + L-arginine. It participates in amino-acid biosynthesis; L-arginine biosynthesis; L-arginine from L-ornithine and carbamoyl phosphate: step 3/3. This chain is Argininosuccinate lyase, found in Staphylococcus saprophyticus subsp. saprophyticus (strain ATCC 15305 / DSM 20229 / NCIMB 8711 / NCTC 7292 / S-41).